The sequence spans 340 residues: Phosphate acyltransferase (340 aa).

The protein belongs to the PlsX family. In terms of assembly, homodimer. Probably interacts with PlsY.

It localises to the cytoplasm. The catalysed reaction is a fatty acyl-[ACP] + phosphate = an acyl phosphate + holo-[ACP]. The protein operates within lipid metabolism; phospholipid metabolism. Functionally, catalyzes the reversible formation of acyl-phosphate (acyl-PO(4)) from acyl-[acyl-carrier-protein] (acyl-ACP). This enzyme utilizes acyl-ACP as fatty acyl donor, but not acyl-CoA. The chain is Phosphate acyltransferase from Marinobacter nauticus (strain ATCC 700491 / DSM 11845 / VT8) (Marinobacter aquaeolei).